Here is a 308-residue protein sequence, read N- to C-terminus: 1D-myo-inositol 2-acetamido-2-deoxy-alpha-D-glucopyranoside deacetylase (308 aa).

Residues H37, D40, and H171 each coordinate Zn(2+).

The protein belongs to the MshB deacetylase family. It depends on Zn(2+) as a cofactor.

The catalysed reaction is 1D-myo-inositol 2-acetamido-2-deoxy-alpha-D-glucopyranoside + H2O = 1D-myo-inositol 2-amino-2-deoxy-alpha-D-glucopyranoside + acetate. Its function is as follows. Catalyzes the deacetylation of 1D-myo-inositol 2-acetamido-2-deoxy-alpha-D-glucopyranoside (GlcNAc-Ins) in the mycothiol biosynthesis pathway. The chain is 1D-myo-inositol 2-acetamido-2-deoxy-alpha-D-glucopyranoside deacetylase from Mycobacterium sp. (strain JLS).